We begin with the raw amino-acid sequence, 571 residues long: Mannan endo-1,4-beta-mannosidase B (571 aa).

The N-terminal stretch at 1–19 (MNSLSLLLFCIFFVFSTFA) is a signal peptide. The CBM6 domain occupies 22–141 (VYYEAENGKL…WMWVDAFVIN (120 aa)). Residues 165-459 (PAAKKLYDFL…FTHKTVMNMD (295 aa)) form the GH26 domain. Tryptophan 286 provides a ligand contact to substrate. The active-site Proton donor is glutamate 319. Residues tryptophan 324 and tyrosine 379 each contribute to the substrate site. Catalysis depends on glutamate 407, which acts as the Nucleophile. 2 CBM10 domains span residues 491–527 (ECFSIPLGYPCCKGNTVVYTDNDGDWGVENNEWCGIG) and 534–571 (VCWSEALGYPCCVSSSDVYYTDNDGEWGVENGDWCGII).

This sequence belongs to the glycosyl hydrolase 26 family.

The catalysed reaction is Random hydrolysis of (1-&gt;4)-beta-D-mannosidic linkages in mannans, galactomannans and glucomannans.. The polypeptide is Mannan endo-1,4-beta-mannosidase B (MANB) (Piromyces sp).